We begin with the raw amino-acid sequence, 308 residues long: Isoflavone reductase homolog (308 aa).

Residues 11–17 (GGTGYIG), Arg-36, and Lys-45 each bind NADP(+). Lys-133 serves as the catalytic Proton acceptor. Arg-137 is an NADP(+) binding site.

The protein belongs to the NmrA-type oxidoreductase family. Isoflavone reductase subfamily.

The protein localises to the cytoplasm. In Solanum tuberosum (Potato), this protein is Isoflavone reductase homolog.